Consider the following 466-residue polypeptide: Cytochrome P450 85A (466 aa).

The chain crosses the membrane as a helical span at residues 2-22 (ALFMAILGVLVLLLCLCSALL). Cys-414 is a binding site for heme.

It belongs to the cytochrome P450 family. The cofactor is heme.

Its subcellular location is the membrane. Functionally, catalyzes the C6-oxidation step in brassinosteroids biosynthesis. This is Cytochrome P450 85A from Phaseolus vulgaris (Kidney bean).